The following is a 137-amino-acid chain: UPF0146 protein MJ0688 (137 aa).

This sequence belongs to the UPF0146 family.

This chain is UPF0146 protein MJ0688, found in Methanocaldococcus jannaschii (strain ATCC 43067 / DSM 2661 / JAL-1 / JCM 10045 / NBRC 100440) (Methanococcus jannaschii).